The sequence spans 735 residues: 1,4-alpha-glucan branching enzyme GlgB 1 (735 aa).

Aspartate 418 acts as the Nucleophile in catalysis. Glutamate 471 acts as the Proton donor in catalysis.

It belongs to the glycosyl hydrolase 13 family. GlgB subfamily. As to quaternary structure, monomer.

The catalysed reaction is Transfers a segment of a (1-&gt;4)-alpha-D-glucan chain to a primary hydroxy group in a similar glucan chain.. Its pathway is glycan biosynthesis; glycogen biosynthesis. Its function is as follows. Catalyzes the formation of the alpha-1,6-glucosidic linkages in glycogen by scission of a 1,4-alpha-linked oligosaccharide from growing alpha-1,4-glucan chains and the subsequent attachment of the oligosaccharide to the alpha-1,6 position. This chain is 1,4-alpha-glucan branching enzyme GlgB 1, found in Rhizobium etli (strain ATCC 51251 / DSM 11541 / JCM 21823 / NBRC 15573 / CFN 42).